The primary structure comprises 170 residues: Adenine phosphoribosyltransferase (170 aa).

This sequence belongs to the purine/pyrimidine phosphoribosyltransferase family. Homodimer.

The protein localises to the cytoplasm. It catalyses the reaction AMP + diphosphate = 5-phospho-alpha-D-ribose 1-diphosphate + adenine. The protein operates within purine metabolism; AMP biosynthesis via salvage pathway; AMP from adenine: step 1/1. Catalyzes a salvage reaction resulting in the formation of AMP, that is energically less costly than de novo synthesis. This Lactococcus lactis subsp. cremoris (strain SK11) protein is Adenine phosphoribosyltransferase.